A 287-amino-acid polypeptide reads, in one-letter code: Heavy metal-associated isoprenylated plant protein 4 (287 aa).

HMA domains are found at residues 14 to 80 (IITA…VELI) and 112 to 176 (IRTT…KHAE). The a metal cation site is built by Cys25, Cys28, Cys123, and Cys126. A coiled-coil region spans residues 179-235 (SSKTEEEKKKEEEDKKKKEEEDKKKKEDEKKKEEEKKKEEENKKKEGEKKKEEVKVE). The tract at residues 181-232 (KTEEEKKKEEEDKKKKEEEDKKKKEDEKKKEEEKKKEEENKKKEGEKKKEEV) is disordered. Cys284 carries the cysteine methyl ester modification. Residue Cys284 is the site of S-farnesyl cysteine attachment. Residues 285–287 (RIV) constitute a propeptide, removed in mature form.

The protein belongs to the HIPP family.

Heavy-metal-binding protein. The polypeptide is Heavy metal-associated isoprenylated plant protein 4 (Arabidopsis thaliana (Mouse-ear cress)).